We begin with the raw amino-acid sequence, 130 residues long: Anti-adapter protein IraD (130 aa).

Belongs to the GpW/Gp25 family. IraD subfamily. As to quaternary structure, interacts with RssB.

Its subcellular location is the cytoplasm. Its function is as follows. Inhibits RpoS proteolysis by regulating RssB activity, thereby increasing the stability of the sigma stress factor RpoS during oxidative stress. Its effect on RpoS stability is due to its interaction with RssB, which probably blocks the interaction of RssB with RpoS, and the consequent delivery of the RssB-RpoS complex to the ClpXP protein degradation pathway. This chain is Anti-adapter protein IraD, found in Escherichia coli (strain K12 / MC4100 / BW2952).